The chain runs to 163 residues: Probable protein tyrosine phosphatase type IVA B (163 aa).

In terms of domain architecture, Tyrosine-protein phosphatase spans 10 to 161 (TIIESSTHKF…YKASKKAGCK (152 aa)). A disulfide bridge connects residues cysteine 49 and cysteine 104. The active-site Proton donor is the aspartate 70. The active-site Phosphocysteine intermediate is the cysteine 104. 105–110 (IAGLGR) lines the phosphate pocket. Arginine 110 is a binding site for substrate. At cysteine 160 the chain carries Cysteine methyl ester. Residue cysteine 160 is the site of S-farnesyl cysteine attachment. Positions 161-163 (KIM) are cleaved as a propeptide — removed in mature form.

This sequence belongs to the protein-tyrosine phosphatase family.

Its subcellular location is the membrane. The enzyme catalyses O-phospho-L-tyrosyl-[protein] + H2O = L-tyrosyl-[protein] + phosphate. This is Probable protein tyrosine phosphatase type IVA B from Dictyostelium discoideum (Social amoeba).